Consider the following 283-residue polypeptide: Flagellar filament 35 kDa core protein (283 aa).

Belongs to the bacterial flagellin family. The flagellum consists of two outer layers around a core that contains several antigenically related polypeptides.

Its subcellular location is the periplasmic flagellum. It is found in the periplasm. In terms of biological role, component of the core of the flagella. This Leptospira interrogans serogroup Icterohaemorrhagiae serovar Lai (strain 56601) protein is Flagellar filament 35 kDa core protein (flaB).